The following is a 260-amino-acid chain: MANFENLSSDFQTIAMDIYSSITQAADLNNNNSNLHFQTFHPSSTSLESLFLHHHQQQLLHFPGNSPDSSNNFSSTSSFLHSDHNIVDETKKRKALLPTLSSSETSGVSDNTNVIATETGSLRRGKRLKKKKEEEDEKEREVVHVRARRGQATDSHSLAERVRRGKINERLRCLQDMVPGCYKAMGMATMLDEIINYVQSLQNQVEFLSMKLTAASSFYDFNSETDAVDSMQRAKARETVEMGRQTRDGSPVFHLSTWSL.

Residues 118–139 (ETGSLRRGKRLKKKKEEEDEKE) are disordered. The region spanning 151–201 (QATDSHSLAERVRRGKINERLRCLQDMVPGCYKAMGMATMLDEIINYVQSL) is the bHLH domain.

Its subcellular location is the nucleus. Functionally, positive regulator of brassinosteroid signaling. The sequence is that of Transcription factor BEE 1 (BEE1) from Arabidopsis thaliana (Mouse-ear cress).